Reading from the N-terminus, the 65-residue chain is Carboxypeptidase A inhibitor (65 aa).

Belongs to the protease inhibitor I44 family.

The protein resides in the secreted. Its function is as follows. Inhibits carboxypeptidase A. The chain is Carboxypeptidase A inhibitor from Ascaris suum (Pig roundworm).